Consider the following 132-residue polypeptide: Holo-[acyl-carrier-protein] synthase (132 aa).

2 residues coordinate Mg(2+): aspartate 8 and glutamate 64.

It belongs to the P-Pant transferase superfamily. AcpS family. Mg(2+) serves as cofactor.

The protein resides in the cytoplasm. The catalysed reaction is apo-[ACP] + CoA = holo-[ACP] + adenosine 3',5'-bisphosphate + H(+). Functionally, transfers the 4'-phosphopantetheine moiety from coenzyme A to a Ser of acyl-carrier-protein. This Shewanella woodyi (strain ATCC 51908 / MS32) protein is Holo-[acyl-carrier-protein] synthase.